Reading from the N-terminus, the 34-residue chain is Photosystem II reaction center protein Psb30 (34 aa).

The chain crosses the membrane as a helical span at residues 6-26 (VIGQLLSATLIVLAGPAVIFV).

Belongs to the Psb30/Ycf12 family. As to quaternary structure, PSII is composed of 1 copy each of membrane proteins PsbA, PsbB, PsbC, PsbD, PsbE, PsbF, PsbH, PsbI, PsbJ, PsbK, PsbL, PsbM, PsbT, PsbX, PsbY, PsbZ, Psb30/Ycf12, peripheral proteins of the oxygen-evolving complex and a large number of cofactors. It forms dimeric complexes.

It is found in the plastid. It localises to the chloroplast thylakoid membrane. Its function is as follows. A core subunit of photosystem II (PSII), probably helps stabilize the reaction center. The sequence is that of Photosystem II reaction center protein Psb30 from Heterosigma akashiwo (strain NIES-293 / 8280G21-1).